The sequence spans 335 residues: L-carnitine dehydrogenase (335 aa).

29–34 (GTGVIG) lines the NAD(+) pocket.

Belongs to the 3-hydroxyacyl-CoA dehydrogenase family. L-carnitine dehydrogenase subfamily. In terms of assembly, homodimer.

Its subcellular location is the cytoplasm. The enzyme catalyses carnitine + NAD(+) = 3-dehydrocarnitine + NADH + H(+). It functions in the pathway amine and polyamine metabolism; carnitine metabolism. Functionally, catalyzes the NAD(+)-dependent oxidation of L-carnitine to 3-dehydrocarnitine. The sequence is that of L-carnitine dehydrogenase from Streptomyces griseus subsp. griseus (strain JCM 4626 / CBS 651.72 / NBRC 13350 / KCC S-0626 / ISP 5235).